Reading from the N-terminus, the 336-residue chain is CST complex subunit STN1 (336 aa).

Residues 49 to 126 constitute a DNA-binding region (OB); the sequence is VDILGTVVCV…EVVASIFYKV (78 aa). Winged helix-turn-helix (wHTH) stretches follow at residues 162–263 and 264–336; these read QSQE…YVTD and HDKE…YTAF.

It belongs to the CTC1 family. As to quaternary structure, component of the CST complex.

It is found in the nucleus. Its subcellular location is the chromosome. The protein localises to the telomere. Its function is as follows. Component of the CST complex proposed to act as a specialized replication factor promoting DNA replication under conditions of replication stress or natural replication barriers such as the telomere duplex. The CST complex binds single-stranded DNA with high affinity in a sequence-independent manner, while isolated subunits bind DNA with low affinity by themselves. Initially the CST complex has been proposed to protect telomeres from DNA degradation. However, the CST complex has been shown to be involved in several aspects of telomere replication. The protein is CST complex subunit STN1 of Aquarana catesbeiana (American bullfrog).